The sequence spans 400 residues: Sphingosine 1-phosphate receptor 5 (400 aa).

The Extracellular portion of the chain corresponds to 1–41; the sequence is MEPGLLRPAPVSEVIVLHYNYTGKLRGARYQPGAGLRADAA. Residue asparagine 20 is glycosylated (N-linked (GlcNAc...) asparagine). The chain crosses the membrane as a helical span at residues 42–62; the sequence is VCLAVCAFIVLENLAVLLVLV. The Cytoplasmic segment spans residues 63-68; sequence RHPRFH. The chain crosses the membrane as a helical span at residues 69-89; sequence APMFLLLGSLTLSDLLAGAAY. Residues 90–111 are Extracellular-facing; the sequence is ATNILLSGPLTLRLSPALWFAR. The chain crosses the membrane as a helical span at residues 112 to 132; it reads EGGVFVALAASVLSLLAIALE. The Cytoplasmic segment spans residues 133–151; sequence RHLTMARRGPAPAASRART. A helical transmembrane segment spans residues 152–172; sequence LAMAVAAWGASLLLGLLPALG. The Extracellular portion of the chain corresponds to 173–192; sequence WNCLGRLETCSTVLPLYAKA. The chain crosses the membrane as a helical span at residues 193-213; it reads YVLFCVLAFLGILAAICALYA. Over 214 to 253 the chain is Cytoplasmic; the sequence is RIYCQVRANARRLRAGPGSRRATSSSRSRHTPRSLALLRT. A helical transmembrane segment spans residues 254–274; sequence LSVVLLAFVACWGPLFLLLLL. Over 275–288 the chain is Extracellular; that stretch reads DVACPARACPVLLQ. A helical transmembrane segment spans residues 289 to 309; it reads ADPFLGLAMANSLLNPIIYTF. At 310–400 the chain is on the cytoplasmic side; that stretch reads TNRDLRHALL…NRSLVPTATD (91 aa). Cysteine 324 is lipidated: S-palmitoyl cysteine. The tract at residues 331–400 is disordered; that stretch reads QDSSNSLQRS…NRSLVPTATD (70 aa). A phosphoserine mark is found at serine 340, serine 342, and serine 384. Over residues 360–400 the composition is skewed to polar residues; sequence DRSSSPSEHLSPQQDGVDTSCSTGSPGVATANRSLVPTATD.

The protein belongs to the G-protein coupled receptor 1 family. As to expression, expressed in spleen and brain. In the CNS expression is restricted to oligodendrocytes.

The protein localises to the cell membrane. Receptor for the lysosphingolipid sphingosine 1-phosphate (S1P). S1P is a bioactive lysophospholipid that elicits diverse physiological effect on most types of cells and tissues. Is coupled to both the G(i/0)alpha and G(12) subclass of heteromeric G-proteins. S1P activation on oligodendroglial cells modulates two distinct functional pathways mediating either process retraction or cell survival. S1P activation on O4-positive pre-oligodendrocytes induces process retraction via a Rho kinase/collapsin response-mediated protein signaling pathway. The S1P-induced survival of mature oligodendrocytes is mediated through a pertussis toxin-sensitive, Akt-dependent pathway. S1P activation on oligodendroglial cells modulates two distinct functional pathways mediating either process retraction or cell survival. These effects depend on the developmental stage of the cell. The polypeptide is Sphingosine 1-phosphate receptor 5 (S1pr5) (Mus musculus (Mouse)).